We begin with the raw amino-acid sequence, 458 residues long: Cell division protein FtsZ (458 aa).

GTP is bound by residues 22–26, 109–111, Glu140, Arg144, and Asp188; these read GAGGN and GTG. A disordered region spans residues 319–458; that stretch reads KAEEEASKQP…IPFFKHRRQD (140 aa). Residues 368-379 show a composition bias toward polar residues; the sequence is NTISHEAPTQSI. A compositionally biased stretch (basic and acidic residues) spans 401 to 418; sequence KQDRKENNRPQPVENKEK. A compositionally biased stretch (low complexity) spans 425–439; that stretch reads SFSSDDSTSISQIET.

It belongs to the FtsZ family. As to quaternary structure, homodimer. Polymerizes to form a dynamic ring structure in a strictly GTP-dependent manner. Interacts directly with several other division proteins.

The protein localises to the cytoplasm. In terms of biological role, essential cell division protein that forms a contractile ring structure (Z ring) at the future cell division site. The regulation of the ring assembly controls the timing and the location of cell division. One of the functions of the FtsZ ring is to recruit other cell division proteins to the septum to produce a new cell wall between the dividing cells. Binds GTP and shows GTPase activity. The chain is Cell division protein FtsZ from Lactobacillus johnsonii (strain CNCM I-12250 / La1 / NCC 533).